Reading from the N-terminus, the 157-residue chain is Eukaryotic translation initiation factor 5A-2 (157 aa).

Residue Ser2 is modified to N-acetylserine. Ser2 bears the Phosphoserine mark. Thr7 carries the post-translational modification Phosphothreonine. Position 51 is a hypusine (Lys51). Phosphoserine is present on Ser74. Lys86 participates in a covalent cross-link: Glycyl lysine isopeptide (Lys-Gly) (interchain with G-Cter in ubiquitin).

Belongs to the eIF-5A family. As to quaternary structure, homodimer. Binds to 80S ribosomes. Actively translating ribosomes show mutually exclusive binding of eIF5a (HYP2 or ANB1) and EFT1/eEF2. Interacts with DYS1 and LIA1. Post-translationally, lys-51 undergoes hypusination, a unique post-translational modification that consists in the addition of a butylamino group from spermidine to lysine side chain, leading to the formation of the unusual amino acid hypusine. eIF-5As are the only known proteins to undergo this modification, which is essential for their function.

It is found in the cytoplasm. Functionally, translation factor that promotes translation elongation and termination, particularly upon ribosome stalling at specific amino acid sequence contexts. Binds between the exit (E) and peptidyl (P) site of the ribosome and promotes rescue of stalled ribosome: specifically required for efficient translation of polyproline-containing peptides as well as other motifs that stall the ribosome. Acts as ribosome quality control (RQC) cofactor by joining the RQC complex to facilitate peptidyl transfer during CAT tailing step. Involved in actin dynamics and cell cycle progression, mRNA decay and probably in a pathway involved in stress response and maintenance of cell wall integrity. The chain is Eukaryotic translation initiation factor 5A-2 (ANB1) from Saccharomyces cerevisiae (strain ATCC 204508 / S288c) (Baker's yeast).